Reading from the N-terminus, the 173-residue chain is Photosystem I assembly protein Ycf3 (173 aa).

TPR repeat units follow at residues 35 to 68, 72 to 105, and 120 to 153; these read AFVY…EEDT, GYIL…NPRL, and GEKA…APNN.

This sequence belongs to the Ycf3 family.

It is found in the cellular thylakoid membrane. In terms of biological role, essential for the assembly of the photosystem I (PSI) complex. May act as a chaperone-like factor to guide the assembly of the PSI subunits. The chain is Photosystem I assembly protein Ycf3 from Trichormus variabilis (strain ATCC 29413 / PCC 7937) (Anabaena variabilis).